Here is a 206-residue protein sequence, read N- to C-terminus: Large ribosomal subunit protein uL4 (206 aa).

Residues M63 to H96 are disordered. Residues Y64–A77 show a composition bias toward basic residues.

Belongs to the universal ribosomal protein uL4 family. As to quaternary structure, part of the 50S ribosomal subunit.

In terms of biological role, one of the primary rRNA binding proteins, this protein initially binds near the 5'-end of the 23S rRNA. It is important during the early stages of 50S assembly. It makes multiple contacts with different domains of the 23S rRNA in the assembled 50S subunit and ribosome. Functionally, forms part of the polypeptide exit tunnel. The polypeptide is Large ribosomal subunit protein uL4 (Allorhizobium ampelinum (strain ATCC BAA-846 / DSM 112012 / S4) (Agrobacterium vitis (strain S4))).